A 685-amino-acid polypeptide reads, in one-letter code: Ubiquitin carboxyl-terminal hydrolase BAP1 (685 aa).

Residues 4 to 235 (GWLELESDPG…IRFNLMAVVP (232 aa)) form the UCH catalytic domain. Residue C91 is the Nucleophile of the active site. Residue H169 is the Proton donor of the active site. Disordered regions lie at residues 273–325 (AQKP…RGPV), 363–425 (MQEE…PGVL), 440–493 (LSIK…SSPV), and 550–579 (KVSP…EVPQ). Over residues 385–394 (DTDEEEEEET) the composition is skewed to acidic residues. The segment covering 450–493 (PHSQPSPTPSNESTDTASEIGSAFNSPLRSPLRSANPTRPSSPV) has biased composition (polar residues). A compositionally biased stretch (basic and acidic residues) spans 556-574 (NKVEEPRESSEPDTERSRV). The ULD domain occupies 626 to 654 (NYDEFICAFISMLAQEGMLASLVEQNISV). A disordered region spans residues 659–685 (GVSIGRLHKQRKPDRRKRSRPYKAKRQ). Residues 673-678 (RRKRSR) carry the Nuclear localization signal motif.

This sequence belongs to the peptidase C12 family. BAP1 subfamily. In terms of assembly, component of the PR-DUB complex.

Its subcellular location is the cytoplasm. The protein localises to the nucleus. It catalyses the reaction Thiol-dependent hydrolysis of ester, thioester, amide, peptide and isopeptide bonds formed by the C-terminal Gly of ubiquitin (a 76-residue protein attached to proteins as an intracellular targeting signal).. Its function is as follows. Deubiquitinating enzyme that plays a key role in chromatin by mediating deubiquitination of histone H2A. Catalytic component of the PR-DUB complex, a complex that specifically mediates deubiquitination of histone H2A monoubiquitinated at 'Lys-119' (H2AK119ub1). The sequence is that of Ubiquitin carboxyl-terminal hydrolase BAP1 (bap1) from Xenopus tropicalis (Western clawed frog).